We begin with the raw amino-acid sequence, 292 residues long: tRNA dimethylallyltransferase (292 aa).

An ATP-binding site is contributed by 10–17 (GPTASGKS). 12–17 (TASGKS) provides a ligand contact to substrate. 2 interaction with substrate tRNA regions span residues 35 to 38 (DSMQ) and 159 to 163 (QRIVR).

Belongs to the IPP transferase family. Monomer. It depends on Mg(2+) as a cofactor.

The enzyme catalyses adenosine(37) in tRNA + dimethylallyl diphosphate = N(6)-dimethylallyladenosine(37) in tRNA + diphosphate. Its function is as follows. Catalyzes the transfer of a dimethylallyl group onto the adenine at position 37 in tRNAs that read codons beginning with uridine, leading to the formation of N6-(dimethylallyl)adenosine (i(6)A). The sequence is that of tRNA dimethylallyltransferase from Chelativorans sp. (strain BNC1).